The primary structure comprises 292 residues: Elongation factor Ts (292 aa).

The segment at T82 to V85 is involved in Mg(2+) ion dislocation from EF-Tu.

It belongs to the EF-Ts family.

The protein resides in the cytoplasm. Its function is as follows. Associates with the EF-Tu.GDP complex and induces the exchange of GDP to GTP. It remains bound to the aminoacyl-tRNA.EF-Tu.GTP complex up to the GTP hydrolysis stage on the ribosome. This Bordetella parapertussis (strain 12822 / ATCC BAA-587 / NCTC 13253) protein is Elongation factor Ts.